Here is a 174-residue protein sequence, read N- to C-terminus: Endoribonuclease YbeY (174 aa).

Positions 129, 133, and 139 each coordinate Zn(2+).

It belongs to the endoribonuclease YbeY family. Zn(2+) is required as a cofactor.

The protein resides in the cytoplasm. Its function is as follows. Single strand-specific metallo-endoribonuclease involved in late-stage 70S ribosome quality control and in maturation of the 3' terminus of the 16S rRNA. The sequence is that of Endoribonuclease YbeY from Lactobacillus acidophilus (strain ATCC 700396 / NCK56 / N2 / NCFM).